Reading from the N-terminus, the 105-residue chain is MRRRYSMDINRAIRVAVDTGNVVLGTKQAIKNIKHGEGKLVIIAGNCAKDVKEDIFYYTKLSETPVYTHQVTSIELGAICGKPFPVSALLVLEPGNSAILNINNE.

Belongs to the eukaryotic ribosomal protein eL30 family.

This is Large ribosomal subunit protein eL30 (rpl30e) from Methanococcus vannielii (strain ATCC 35089 / DSM 1224 / JCM 13029 / OCM 148 / SB).